We begin with the raw amino-acid sequence, 129 residues long: MSTFAFLLLCVQACLIQNVYGQCLGRGLGGCGCGGGLGGYGLGYGLGGYGGGYGYGGYGGGYYGGYGGEGVGNVGVAGVLPVGGVTAVGGRVPIIGGVEFGGPACAGGCVSICGHCAPTCGCGYGGLYY.

An N-terminal signal peptide occupies residues 1-21; the sequence is MSTFAFLLLCVQACLIQNVYG. Residues 22–64 form a left arm region; sequence QCLGRGLGGCGCGGGLGGYGLGYGLGGYGGGYGYGGYGGGYYG. A central domain region spans residues 65–112; it reads GYGGEGVGNVGVAGVLPVGGVTAVGGRVPIIGGVEFGGPACAGGCVSI. Residues 113-129 are right arm; it reads CGHCAPTCGCGYGGLYY.

The protein belongs to the chorion protein family.

Functionally, this protein is one of many from the eggshell of the silk moth. In Bombyx mori (Silk moth), this protein is Chorion class A protein L11.